The primary structure comprises 90 residues: Bombyxin B-12 (90 aa).

The first 20 residues, 1–20, serve as a signal peptide directing secretion; it reads MMKTTIMFMLVVVISLTYSS. 3 cysteine pairs are disulfide-bonded: C30–C76, C42–C89, and C75–C80. The propeptide at 49 to 67 is c peptide like; it reads SGAQYAPYFWTRQYLGSRG.

It belongs to the insulin family. As to quaternary structure, heterodimer of a B chain and an A chain linked by two disulfide bonds.

It is found in the secreted. Its function is as follows. Brain peptide responsible for activation of prothoracic glands to produce ecdysone in insects. The sequence is that of Bombyxin B-12 (BBXB12) from Bombyx mori (Silk moth).